Consider the following 258-residue polypeptide: Small ribosomal subunit protein uS2 (258 aa).

The disordered stretch occupies residues 227–258 (GEQFAPASEQKEEVKTQEVQEVEDSNDDVIDD). A compositionally biased stretch (basic and acidic residues) spans 235 to 244 (EQKEEVKTQE). Acidic residues predominate over residues 246 to 258 (QEVEDSNDDVIDD).

Belongs to the universal ribosomal protein uS2 family.

The chain is Small ribosomal subunit protein uS2 from Caldicellulosiruptor saccharolyticus (strain ATCC 43494 / DSM 8903 / Tp8T 6331).